Here is a 372-residue protein sequence, read N- to C-terminus: MHPDVSADLAELDATLKTVESVLDIEELRRRIDELEHQAADPDLWNDQDHAQRVTSELSHAQGELRRVEDLRRRLEDLPVLYELAEGEEGEARTAALEEADAERAALHSDVEAMEVRTLLSGEYDKREALVNIRSGAGGVDAADWAEMLMRMYIRWADRHGYPVEVYDTSYAEEAGIKSATFAVKTPYAYGTLSVEMGTHRLVRISPFDNQGRRQTSFAEVEVLPVVETTDHIEVPETEIRVDVYRSSGPGGQSVNTTDSAVRITHIPTGIVVTCQNEKSQLQNKISAMRVLQAKLLERKRQEERAEMDALKTNEGASWGNQMRSYVLHPYQMVKDLRTNYEVNNPSAVLNGDIDGFIESGIRWRMRESQAS.

Q253 is subject to N5-methylglutamine.

Belongs to the prokaryotic/mitochondrial release factor family. Post-translationally, methylated by PrmC. Methylation increases the termination efficiency of RF2.

The protein resides in the cytoplasm. Functionally, peptide chain release factor 2 directs the termination of translation in response to the peptide chain termination codons UGA and UAA. The protein is Peptide chain release factor 2 of Nocardia farcinica (strain IFM 10152).